A 210-amino-acid polypeptide reads, in one-letter code: NAD(P)H-quinone oxidoreductase subunit I (210 aa).

2 4Fe-4S ferredoxin-type domains span residues 54-83 and 94-123; these read GRIH…VDWV and YSYS…VTED. [4Fe-4S] cluster contacts are provided by cysteine 63, cysteine 66, cysteine 69, cysteine 73, cysteine 103, cysteine 106, cysteine 109, and cysteine 113.

The protein belongs to the complex I 23 kDa subunit family. As to quaternary structure, NDH-1 is composed of at least 11 different subunits. Requires [4Fe-4S] cluster as cofactor.

It localises to the cellular thylakoid membrane. The enzyme catalyses a plastoquinone + NADH + (n+1) H(+)(in) = a plastoquinol + NAD(+) + n H(+)(out). The catalysed reaction is a plastoquinone + NADPH + (n+1) H(+)(in) = a plastoquinol + NADP(+) + n H(+)(out). Its function is as follows. NDH-1 shuttles electrons from an unknown electron donor, via FMN and iron-sulfur (Fe-S) centers, to quinones in the respiratory and/or the photosynthetic chain. The immediate electron acceptor for the enzyme in this species is believed to be plastoquinone. Couples the redox reaction to proton translocation, and thus conserves the redox energy in a proton gradient. The polypeptide is NAD(P)H-quinone oxidoreductase subunit I (Synechococcus sp. (strain JA-3-3Ab) (Cyanobacteria bacterium Yellowstone A-Prime)).